Reading from the N-terminus, the 1372-residue chain is Serine protease pic autotransporter (1372 aa).

Residues 1–55 form the signal peptide; that stretch reads MNKVYSLKYCPVTGGLIAVSELARRVIKKTCRRLTHILLAGIPAICLCYSQISQA. Positions 56–301 constitute a Peptidase S6 domain; the sequence is GIVRSDIAYQ…NVIPTDYLNQ (246 aa). Catalysis depends on charge relay system residues H127, D155, and S258. The region spanning 1106–1372 is the Autotransporter domain; the sequence is DTNGDAGAWA…AVNANFRYMF (267 aa).

Post-translationally, cleaved to release the mature protein from the outer membrane.

It localises to the periplasm. The protein resides in the secreted. It is found in the cell surface. Its subcellular location is the cell outer membrane. In terms of biological role, involved in intestinal colonization, displays in vitro mucinolytic activity, serum resistance, and hemagglutination. Important to penetrate the intestinal mucus layer. The polypeptide is Serine protease pic autotransporter (pic) (Escherichia coli O44:H18 (strain 042 / EAEC)).